We begin with the raw amino-acid sequence, 159 residues long: Sumo-conjugating enzyme ubc9 (159 aa).

Residues 4-157 (ISSARLSEER…VKAQSKVYPP (154 aa)) form the UBC core domain. C93 acts as the Glycyl thioester intermediate in catalysis.

The protein belongs to the ubiquitin-conjugating enzyme family.

The protein localises to the nucleus. Its pathway is protein modification; protein sumoylation. Accepts the ubiquitin-like protein sumo from the E1 complex and catalyzes its covalent attachment to other proteins with the help of an E3 ligase. This chain is Sumo-conjugating enzyme ubc9 (ubc9), found in Dictyostelium discoideum (Social amoeba).